The sequence spans 436 residues: Chromosomal replication initiator protein DnaA (436 aa).

The tract at residues 1–80 is domain I, interacts with DnaA modulators; sequence MSHEAVWQHV…QAPRFELRVV (80 aa). A domain II region spans residues 80-100; the sequence is VPGVVVQEDIFQAAPAEAPRP. The tract at residues 101-317 is domain III, AAA+ region; that stretch reads KLNPKYTFEN…GALMRAIAFA (217 aa). ATP is bound by residues glycine 145, glycine 147, lysine 148, and threonine 149. The segment at 318 to 436 is domain IV, binds dsDNA; it reads SLNGVELTRA…LLRTLREACT (119 aa).

It belongs to the DnaA family. As to quaternary structure, oligomerizes as a right-handed, spiral filament on DNA at oriC.

Its subcellular location is the cytoplasm. Plays an essential role in the initiation and regulation of chromosomal replication. ATP-DnaA binds to the origin of replication (oriC) to initiate formation of the DNA replication initiation complex once per cell cycle. Binds the DnaA box (a 9 base pair repeat at the origin) and separates the double-stranded (ds)DNA. Forms a right-handed helical filament on oriC DNA; dsDNA binds to the exterior of the filament while single-stranded (ss)DNA is stabiized in the filament's interior. The ATP-DnaA-oriC complex binds and stabilizes one strand of the AT-rich DNA unwinding element (DUE), permitting loading of DNA polymerase. After initiation quickly degrades to an ADP-DnaA complex that is not apt for DNA replication. Binds acidic phospholipids. The chain is Chromosomal replication initiator protein DnaA from Thermus thermophilus (strain ATCC BAA-163 / DSM 7039 / HB27).